Reading from the N-terminus, the 273-residue chain is 2,3,4,5-tetrahydropyridine-2,6-dicarboxylate N-succinyltransferase (273 aa).

Substrate-binding residues include Arg-105 and Asp-142.

Belongs to the transferase hexapeptide repeat family. In terms of assembly, homotrimer.

The protein resides in the cytoplasm. It carries out the reaction (S)-2,3,4,5-tetrahydrodipicolinate + succinyl-CoA + H2O = (S)-2-succinylamino-6-oxoheptanedioate + CoA. It participates in amino-acid biosynthesis; L-lysine biosynthesis via DAP pathway; LL-2,6-diaminopimelate from (S)-tetrahydrodipicolinate (succinylase route): step 1/3. This is 2,3,4,5-tetrahydropyridine-2,6-dicarboxylate N-succinyltransferase from Bordetella bronchiseptica (strain ATCC BAA-588 / NCTC 13252 / RB50) (Alcaligenes bronchisepticus).